Here is a 241-residue protein sequence, read N- to C-terminus: Ribulose-phosphate 3-epimerase 1 (241 aa).

Ser21 is a binding site for substrate. A divalent metal cation is bound by residues His46, Asp48, and His79. Asp48 (proton acceptor) is an active-site residue. Residues His79, 155 to 158 (GFGG), 192 to 194 (DGG), and 214 to 215 (GS) contribute to the substrate site. Asp192 provides a ligand contact to a divalent metal cation. The Proton donor role is filled by Asp192.

Belongs to the ribulose-phosphate 3-epimerase family. Requires a divalent metal cation as cofactor.

It catalyses the reaction D-ribulose 5-phosphate = D-xylulose 5-phosphate. It participates in carbohydrate degradation. Catalyzes the reversible epimerization of D-ribulose 5-phosphate to D-xylulose 5-phosphate. This is Ribulose-phosphate 3-epimerase 1 from Cupriavidus necator (strain ATCC 17699 / DSM 428 / KCTC 22496 / NCIMB 10442 / H16 / Stanier 337) (Ralstonia eutropha).